The sequence spans 264 residues: Cyclin-P1-1 (264 aa).

The segment at 1–25 (MDAAAAAGGEMSRQKATASAPPPPE) is disordered.

It belongs to the cyclin family. Cyclin U/P subfamily.

The chain is Cyclin-P1-1 (CYCP1-1) from Oryza sativa subsp. japonica (Rice).